A 153-amino-acid chain; its full sequence is Histone H2B.10 (153 aa).

2 stretches are compositionally biased toward basic and acidic residues: residues 1–28 (MAPK…EKAL) and 36–53 (EKRL…EGKK). Positions 1–61 (MAPKAEKKPA…KKAGRKKAKK (61 aa)) are disordered. Residues K7 and K37 each carry the N6-acetyllysine modification. K149 is covalently cross-linked (Glycyl lysine isopeptide (Lys-Gly) (interchain with G-Cter in ubiquitin)).

The protein belongs to the histone H2B family. As to quaternary structure, the nucleosome is a histone octamer containing two molecules each of H2A, H2B, H3 and H4 assembled in one H3-H4 heterotetramer and two H2A-H2B heterodimers. The octamer wraps approximately 147 bp of DNA. Post-translationally, can be acetylated to form H2BK6ac and H2BK33ac. In terms of processing, monoubiquitinated by BRE1 to form H2BK143ub1 and deubiquitinated by UBP26. Required for heterochromatic histone H3 di- and trimethylation at H3K4me. May give a specific tag for epigenetic transcriptional activation.

Its subcellular location is the nucleus. The protein localises to the chromosome. Functionally, core component of nucleosome. Nucleosomes wrap and compact DNA into chromatin, limiting DNA accessibility to the cellular machineries which require DNA as a template. Histones thereby play a central role in transcription regulation, DNA repair, DNA replication and chromosomal stability. DNA accessibility is regulated via a complex set of post-translational modifications of histones, also called histone code, and nucleosome remodeling. The sequence is that of Histone H2B.10 (H2B.10) from Oryza sativa subsp. japonica (Rice).